Reading from the N-terminus, the 268-residue chain is Tetraspanin-5 (268 aa).

At 1-17 (MSGKHYKGPEVSCCIKY) the chain is on the cytoplasmic side. Residues 18–38 (FIFGFNVIFWFLGIAFLGIGL) form a helical membrane-spanning segment. At 39–61 (WAWNEKGVLSNISSITDLGGFDP) the chain is on the extracellular side. N49 is a glycosylation site (N-linked (GlcNAc...) asparagine). A helical transmembrane segment spans residues 62-82 (VWLFLVVGGVMFILGFAGCIG). Topologically, residues 83 to 92 (ALRENTFLLK) are cytoplasmic. Residues 93–113 (FFSVFLGIIFFLELTAGVLAF) traverse the membrane as a helical segment. Residues 114–232 (VFKDWIKDQL…PQFEKWLQDN (119 aa)) are Extracellular-facing. Intrachain disulfides connect C153-C221, C154-C186, C170-C180, and C187-C200. Residues N169 and N174 are each glycosylated (N-linked (GlcNAc...) asparagine). An N-linked (GlcNAc...) asparagine glycan is attached at N232. Residues 233 to 253 (LTIVAGIFIGIALLQIFGICL) form a helical membrane-spanning segment. Residues 254 to 268 (AQNLVSDIEAVRASW) lie on the Cytoplasmic side of the membrane.

This sequence belongs to the tetraspanin (TM4SF) family. In terms of assembly, interacts with ADAM10; the interaction influences ADAM10 substrate specificity, endocytosis and turnover. In terms of processing, palmitoylated.

The protein resides in the cell membrane. Functionally, part of TspanC8 subgroup, composed of 6 members that interact with the transmembrane metalloprotease ADAM10. This interaction is required for ADAM10 exit from the endoplasmic reticulum and for enzymatic maturation and trafficking to the cell surface as well as substrate specificity. Different TspanC8/ADAM10 complexes have distinct substrates. Promotes ADAM10-mediated cleavage of CD44. Seems to regulate VE-cadherin expression in endothelial cells probably through interaction with ADAM10, promoting leukocyte transmigration. The chain is Tetraspanin-5 (TSPAN5) from Bos taurus (Bovine).